The chain runs to 245 residues: tRNA pseudouridine synthase A (245 aa).

Asp52 acts as the Nucleophile in catalysis. Tyr111 serves as a coordination point for substrate.

Belongs to the tRNA pseudouridine synthase TruA family. As to quaternary structure, homodimer.

The enzyme catalyses uridine(38/39/40) in tRNA = pseudouridine(38/39/40) in tRNA. In terms of biological role, formation of pseudouridine at positions 38, 39 and 40 in the anticodon stem and loop of transfer RNAs. This chain is tRNA pseudouridine synthase A, found in Rickettsia africae (strain ESF-5).